The chain runs to 399 residues: Acetate kinase (399 aa).

Residue N7 participates in Mg(2+) binding. K14 lines the ATP pocket. Residue R90 participates in substrate binding. Residue D147 is the Proton donor/acceptor of the active site. ATP contacts are provided by residues 207–211, 282–284, and 330–334; these read HLGNG, DFR, and GIGEN. E385 is a binding site for Mg(2+).

This sequence belongs to the acetokinase family. As to quaternary structure, homodimer. The cofactor is Mg(2+). Mn(2+) is required as a cofactor.

It localises to the cytoplasm. It catalyses the reaction acetate + ATP = acetyl phosphate + ADP. Its pathway is metabolic intermediate biosynthesis; acetyl-CoA biosynthesis; acetyl-CoA from acetate: step 1/2. Its function is as follows. Catalyzes the formation of acetyl phosphate from acetate and ATP. Can also catalyze the reverse reaction. The polypeptide is Acetate kinase (Caldicellulosiruptor bescii (strain ATCC BAA-1888 / DSM 6725 / KCTC 15123 / Z-1320) (Anaerocellum thermophilum)).